The sequence spans 698 residues: Methionine synthase reductase (698 aa).

The region spanning 5–147 is the Flavodoxin-like domain; sequence LLLYATQQGQ…VVEPWIAGLW (143 aa). Residue 93-124 participates in FMN binding; the sequence is LLGLGDSEYTYFCNGGKIIDKRLQELGARHFY. A hinge region spans residues 166 to 247; the sequence is ALPVASPASS…ASLNIPGLPP (82 aa). Phosphoserine occurs at positions 171 and 189. Residues 271–533 form the FAD-binding FR-type domain; sequence DPVFQVPISK…PRTTNSFHLP (263 aa). Residue K291 participates in NADP(+) binding. Residues 451–454 and 487–490 each bind FAD; these read RPYS and GVCT. Residues 610-611, 624-626, and D659 contribute to the NADP(+) site; these read SR and YVQ. Residue W697 coordinates FAD.

In terms of assembly, forms a multiprotein complex with MMACHC, MMADHC and MTR. It depends on FAD as a cofactor. The cofactor is FMN. Found in all tissues tested, particularly abundant in skeletal muscle.

Its subcellular location is the cytoplasm. The enzyme catalyses 2 methylcob(III)alamin-[methionine synthase] + 2 S-adenosyl-L-homocysteine + NADP(+) + H(+) = 2 cob(II)alamin-[methionine synthase] + 2 S-adenosyl-L-methionine + NADPH. It carries out the reaction 2 cob(II)alamin + A + 2 H2O + 2 H(+) = 2 aquacob(III)alamin + AH2. Its function is as follows. Key enzyme in methionine and folate homeostasis responsible for the reactivation of methionine synthase (MTR/MS) activity by catalyzing the reductive methylation of MTR-bound cob(II)alamin. Cobalamin (vitamin B12) forms a complex with MTR to serve as an intermediary in methyl transfer reactions that cycles between MTR-bound methylcob(III)alamin and MTR bound-cob(I)alamin forms, and occasional oxidative escape of the cob(I)alamin intermediate during the catalytic cycle leads to the inactive cob(II)alamin species. The processing of cobalamin in the cytosol occurs in a multiprotein complex composed of at least MMACHC, MMADHC, MTRR and MTR which may contribute to shuttle safely and efficiently cobalamin towards MTR in order to produce methionine. Also necessary for the utilization of methyl groups from the folate cycle, thereby affecting transgenerational epigenetic inheritance. Also acts as a molecular chaperone for methionine synthase by stabilizing apoMTR and incorporating methylcob(III)alamin into apoMTR to form the holoenzyme. Also serves as an aquacob(III)alamin reductase by reducing aquacob(III)alamin to cob(II)alamin; this reduction leads to stimulation of the conversion of apoMTR and aquacob(III)alamin to MTR holoenzyme. The chain is Methionine synthase reductase from Homo sapiens (Human).